Reading from the N-terminus, the 535-residue chain is Bifunctional purine biosynthesis protein PurH (535 aa).

Residues 6–151 (TRLPVRRALI…KNHKDVAIVV (146 aa)) enclose the MGS-like domain.

This sequence belongs to the PurH family.

It catalyses the reaction (6R)-10-formyltetrahydrofolate + 5-amino-1-(5-phospho-beta-D-ribosyl)imidazole-4-carboxamide = 5-formamido-1-(5-phospho-D-ribosyl)imidazole-4-carboxamide + (6S)-5,6,7,8-tetrahydrofolate. It carries out the reaction IMP + H2O = 5-formamido-1-(5-phospho-D-ribosyl)imidazole-4-carboxamide. It functions in the pathway purine metabolism; IMP biosynthesis via de novo pathway; 5-formamido-1-(5-phospho-D-ribosyl)imidazole-4-carboxamide from 5-amino-1-(5-phospho-D-ribosyl)imidazole-4-carboxamide (10-formyl THF route): step 1/1. The protein operates within purine metabolism; IMP biosynthesis via de novo pathway; IMP from 5-formamido-1-(5-phospho-D-ribosyl)imidazole-4-carboxamide: step 1/1. This is Bifunctional purine biosynthesis protein PurH from Azotobacter vinelandii (strain DJ / ATCC BAA-1303).